Here is a 94-residue protein sequence, read N- to C-terminus: Putative pterin-4-alpha-carbinolamine dehydratase (94 aa).

It belongs to the pterin-4-alpha-carbinolamine dehydratase family.

It carries out the reaction (4aS,6R)-4a-hydroxy-L-erythro-5,6,7,8-tetrahydrobiopterin = (6R)-L-erythro-6,7-dihydrobiopterin + H2O. The protein is Putative pterin-4-alpha-carbinolamine dehydratase of Caulobacter vibrioides (strain ATCC 19089 / CIP 103742 / CB 15) (Caulobacter crescentus).